A 414-amino-acid chain; its full sequence is tRNA(Ile)-lysidine synthase (414 aa).

17-22 (SGGCDS) is an ATP binding site.

It belongs to the tRNA(Ile)-lysidine synthase family.

It is found in the cytoplasm. It carries out the reaction cytidine(34) in tRNA(Ile2) + L-lysine + ATP = lysidine(34) in tRNA(Ile2) + AMP + diphosphate + H(+). In terms of biological role, ligates lysine onto the cytidine present at position 34 of the AUA codon-specific tRNA(Ile) that contains the anticodon CAU, in an ATP-dependent manner. Cytidine is converted to lysidine, thus changing the amino acid specificity of the tRNA from methionine to isoleucine. This is tRNA(Ile)-lysidine synthase from Exiguobacterium sibiricum (strain DSM 17290 / CCUG 55495 / CIP 109462 / JCM 13490 / 255-15).